The chain runs to 2472 residues: Centrosomal protein of 290 kDa (2472 aa).

Residues 1-689 are self-association (with itself or C-terminus); sequence MPPNIKWKEL…MESKNAEGIF (689 aa). 3 coiled-coil regions span residues 59 to 747, 1129 to 1392, and 1459 to 1492; these read MKMK…LRQS, RQRI…QQSK, and QVILKTQATCKSLEEKLKEKESALRLAEQNILSR. The disordered stretch occupies residues 128-164; that stretch reads DRELEDMEKELDKEKKVNEQLALRNEEAENENSKLRR. Positions 137–164 are enriched in basic and acidic residues; sequence ELDKEKKVNEQLALRNEEAENENSKLRR. Positions 690–890 are interaction with IQCB1; sequence DASLHLKAQV…TVLQVNEKSL (201 aa). Disordered regions lie at residues 1691 to 1713 and 2451 to 2472; these read AHKDSQSLKSELQAQKEANSRAP and PSPLAASEHSEDGESPHSFPIY. Positions 1697–1713 are enriched in polar residues; it reads SLKSELQAQKEANSRAP. The segment at 1960 to 2472 is self-association (with itself or N-terminus); it reads TTGMTVDQVL…GESPHSFPIY (513 aa).

In terms of assembly, part of the tectonic-like complex (also named B9 complex). Interacts with ATF4 via its N-terminal region. Associates with the BBSome complex, interacting (via N-terminus) with BBS4. Interacts with IQCB1/NPHP5; IQCB1 and CEP290/NPHP6 are proposed to form a functional NPHP5-6 module localized to the centrosome. Interacts with NPHP4; the interaction likely requires additional interactors. Interacts with ZNF423, FAM161A, CEP162, CEP162, CEP131, TALPID3, CCDC13, CC2D2A, RPGRIP1. Can self-associate (homo- or heteromeric). Interacts with CCP110; required for suppressing cilia formation. Interacts with RPGR. Associates (via C-terminus) with microtubules; association to microtubule is reduced in response to cellular stress, such as ultraviolet light (UV) radiation or heat shock, in a process that requires p38 MAP kinase signaling. Interacts with FAM161A. Interacts with PCM1. Interacts with CCDC66. Interacts with ARMC9 and CSPP1. Ubiquitinated. May undergo monoubiquitination; monoubiquitination is inhibited in response to cellular stress, such as ultraviolet light (UV) radiation or heat shock, but does not cause its displacement from centriolar satellites. As to expression, expressed in multiple organs during early postnatal development, with highest levels in hindbrain.

It localises to the cytoplasm. The protein localises to the cytoskeleton. Its subcellular location is the microtubule organizing center. The protein resides in the centrosome. It is found in the centriolar satellite. It localises to the nucleus. The protein localises to the centriole. Its subcellular location is the cell projection. The protein resides in the cilium. It is found in the cilium basal body. It localises to the cytoplasmic vesicle. Functionally, involved in early and late steps in cilia formation. Its association with CCP110 is required for inhibition of primary cilia formation by CCP110. May play a role in early ciliogenesis in the disappearance of centriolar satellites and in the transition of primary ciliar vesicles (PCVs) to capped ciliary vesicles (CCVs). Required for the centrosomal recruitment of RAB8A and for the targeting of centriole satellite proteins to centrosomes such as of PCM1. Required for the correct localization of ciliary and phototransduction proteins in retinal photoreceptor cells; may play a role in ciliary transport processes. Required for efficient recruitment of RAB8A to primary cilium. In the ciliary transition zone is part of the tectonic-like complex (also named B9 complex) which is required for tissue-specific ciliogenesis and may regulate ciliary membrane composition. Involved in regulation of the BBSome complex integrity, specifically for presence of BBS2, BBS5 and BBS8/TTC8 in the complex, and in ciliary targeting of selected BBSome cargos. May play a role in controlling entry of the BBSome complex to cilia possibly implicating IQCB1/NPHP5. Activates ATF4-mediated transcription. This chain is Centrosomal protein of 290 kDa, found in Mus musculus (Mouse).